Consider the following 414-residue polypeptide: Secernin-1 (414 aa).

At A2 the chain carries N-acetylalanine. The active site involves C9.

The protein belongs to the peptidase C69 family. Secernin subfamily.

The protein localises to the cytoplasm. Its function is as follows. Regulates exocytosis in mast cells. Increases both the extent of secretion and the sensitivity of mast cells to stimulation with calcium. This Homo sapiens (Human) protein is Secernin-1 (SCRN1).